The primary structure comprises 248 residues: UDP-N-acetyl-D-mannosaminuronic acid transferase (248 aa).

It belongs to the glycosyltransferase 26 family.

The enzyme catalyses UDP-N-acetyl-alpha-D-mannosaminouronate + N-acetyl-alpha-D-glucosaminyl-di-trans,octa-cis-undecaprenyl diphosphate = beta-D-ManNAcA-(1-&gt;4)-alpha-D-GlcNAc-di-trans,octa-cis-undecaprenyl diphosphate + UDP + H(+). It functions in the pathway bacterial outer membrane biogenesis; enterobacterial common antigen biosynthesis. Functionally, catalyzes the synthesis of Und-PP-GlcNAc-ManNAcA (Lipid II), the second lipid-linked intermediate involved in enterobacterial common antigen (ECA) synthesis. The polypeptide is UDP-N-acetyl-D-mannosaminuronic acid transferase (Klebsiella pneumoniae subsp. pneumoniae (strain ATCC 700721 / MGH 78578)).